A 570-amino-acid polypeptide reads, in one-letter code: Vacuolar protein sorting-associated protein 45 (570 aa).

Phosphoserine is present on residues Ser307 and Ser441.

It belongs to the STXBP/unc-18/SEC1 family. Interacts with STX6 and ZFYVE20. Ubiquitous; expression was highest in testis and in brain. Detected in every part of the brain.

Its subcellular location is the golgi apparatus membrane. It localises to the endosome membrane. Functionally, may play a role in vesicle-mediated protein trafficking from the Golgi stack through the trans-Golgi network. The polypeptide is Vacuolar protein sorting-associated protein 45 (Vps45) (Rattus norvegicus (Rat)).